Consider the following 322-residue polypeptide: HPr kinase/phosphorylase (322 aa).

Active-site residues include histidine 146 and lysine 167. 161–168 (GDSGLGKS) provides a ligand contact to ATP. Residue serine 168 coordinates Mg(2+). Aspartate 185 serves as the catalytic Proton acceptor; for phosphorylation activity. Proton donor; for dephosphorylation activity. Residues 209–218 (LEVRGLGLLD) form an important for the catalytic mechanism of both phosphorylation and dephosphorylation region. Position 210 (glutamate 210) interacts with Mg(2+). Arginine 250 is a catalytic residue. The important for the catalytic mechanism of dephosphorylation stretch occupies residues 271–276 (QVAAGR).

It belongs to the HPrK/P family. In terms of assembly, homohexamer. It depends on Mg(2+) as a cofactor.

It carries out the reaction [HPr protein]-L-serine + ATP = [HPr protein]-O-phospho-L-serine + ADP + H(+). The catalysed reaction is [HPr protein]-O-phospho-L-serine + phosphate + H(+) = [HPr protein]-L-serine + diphosphate. In terms of biological role, catalyzes the ATP- as well as the pyrophosphate-dependent phosphorylation of a specific serine residue in HPr, a phosphocarrier protein of the phosphoenolpyruvate-dependent sugar phosphotransferase system (PTS). HprK/P also catalyzes the pyrophosphate-producing, inorganic phosphate-dependent dephosphorylation (phosphorolysis) of seryl-phosphorylated HPr (P-Ser-HPr). The sequence is that of HPr kinase/phosphorylase from Burkholderia mallei (strain NCTC 10247).